The sequence spans 218 residues: Probable septum site-determining protein MinC (218 aa).

The protein belongs to the MinC family. In terms of assembly, interacts with MinD and FtsZ.

Functionally, cell division inhibitor that blocks the formation of polar Z ring septums. Rapidly oscillates between the poles of the cell to destabilize FtsZ filaments that have formed before they mature into polar Z rings. Prevents FtsZ polymerization. The chain is Probable septum site-determining protein MinC from Moorella thermoacetica (strain ATCC 39073 / JCM 9320).